The following is a 1249-amino-acid chain: Nuclear envelope pore membrane protein POM 121 (1249 aa).

Positions 1–10 (MSPAAAAAGA) are enriched in low complexity. The tract at residues 1–27 (MSPAAAAAGAGERRRPIASVRDGRGRG) is disordered. Positions 1-34 (MSPAAAAAGAGERRRPIASVRDGRGRGCGGPARA) are cisternal side. Positions 1–285 (MSPAAAAAGA…APPDRRFSRS (285 aa)) are required for targeting to the nucleus and nuclear pore complex. Positions 11–25 (GERRRPIASVRDGRG) are enriched in basic and acidic residues. Residues 35–55 (VLLGLSLVGLLLYLVPAAAAL) traverse the membrane as a helical segment. The segment at 56 to 1249 (AWLTVGATAA…QARRQHTRKK (1194 aa)) is pore side. A Phosphoserine modification is found at Ser94. Disordered stretches follow at residues 136–220 (LMGS…CGTL), 319–530 (KEKK…LGYS), 602–776 (KKMQ…PVFS), 959–986 (PLPS…AKPA), and 1226–1249 (IGAG…TRKK). The segment covering 168–190 (ARPAPRSPPPRSPPPRSPPPSPP) has biased composition (pro residues). 5 positions are modified to phosphoserine: Ser345, Ser351, Ser371, Ser393, and Ser396. A compositionally biased stretch (polar residues) spans 405–423 (IPSSSRNAITSSYSSTRGI). Over residues 432–445 (PSSSPFSSPASSRS) the composition is skewed to low complexity. Composition is skewed to basic and acidic residues over residues 450-462 (RPAK…ELCH) and 472-486 (ADRE…DTTP). Residues 491 to 502 (NSNSQSTPGSSG) are compositionally biased toward polar residues. Positions 635-652 (PPLGLSQSGPPGLLPSPS) are enriched in low complexity. Over residues 683-696 (QAETATKPQATSAP) the composition is skewed to polar residues. 2 stretches are compositionally biased toward low complexity: residues 712 to 726 (SPSS…SAPP) and 749 to 770 (SVTA…TAPT). Residues 1239–1249 (LQARRQHTRKK) show a composition bias toward basic residues.

Belongs to the POM121 family.

Its subcellular location is the nucleus. It localises to the nuclear pore complex. It is found in the nucleus membrane. The protein resides in the endoplasmic reticulum membrane. Functionally, essential component of the nuclear pore complex (NPC). The repeat-containing domain may be involved in anchoring components of the pore complex to the pore membrane. When overexpressed in cells induces the formation of cytoplasmic annulate lamellae (AL). The sequence is that of Nuclear envelope pore membrane protein POM 121 (POM121) from Homo sapiens (Human).